We begin with the raw amino-acid sequence, 134 residues long: Large ribosomal subunit protein uL18 (134 aa).

The protein belongs to the universal ribosomal protein uL18 family. Part of the 50S ribosomal subunit; part of the 5S rRNA/L5/L18/L25 subcomplex. Contacts the 5S and 23S rRNAs.

Its function is as follows. This is one of the proteins that bind and probably mediate the attachment of the 5S RNA into the large ribosomal subunit, where it forms part of the central protuberance. This chain is Large ribosomal subunit protein uL18, found in Corynebacterium efficiens (strain DSM 44549 / YS-314 / AJ 12310 / JCM 11189 / NBRC 100395).